The chain runs to 135 residues: NADH-quinone oxidoreductase subunit K (135 aa).

A run of 3 helical transmembrane segments spans residues 33–53, 63–83, and 95–115; these read VLGL…FAIG, FLFM…AFVV, and IMFI…LAIL.

It belongs to the complex I subunit 4L family. NDH-1 is composed of 14 different subunits. Subunits NuoA, H, J, K, L, M, N constitute the membrane sector of the complex.

The protein localises to the cell inner membrane. The catalysed reaction is a quinone + NADH + 5 H(+)(in) = a quinol + NAD(+) + 4 H(+)(out). NDH-1 shuttles electrons from NADH, via FMN and iron-sulfur (Fe-S) centers, to quinones in the respiratory chain. The immediate electron acceptor for the enzyme in this species is believed to be ubiquinone. Couples the redox reaction to proton translocation (for every two electrons transferred, four hydrogen ions are translocated across the cytoplasmic membrane), and thus conserves the redox energy in a proton gradient. In Psychrobacter arcticus (strain DSM 17307 / VKM B-2377 / 273-4), this protein is NADH-quinone oxidoreductase subunit K.